A 225-amino-acid polypeptide reads, in one-letter code: Imidazole glycerol phosphate synthase subunit HisH (225 aa).

A Glutamine amidotransferase type-1 domain is found at 3-225; it reads TIAIVDYGMG…LYRNFVDWQP (223 aa). Residue cysteine 82 is the Nucleophile of the active site. Catalysis depends on residues histidine 205 and glutamate 207.

In terms of assembly, heterodimer of HisH and HisF.

It localises to the cytoplasm. The catalysed reaction is 5-[(5-phospho-1-deoxy-D-ribulos-1-ylimino)methylamino]-1-(5-phospho-beta-D-ribosyl)imidazole-4-carboxamide + L-glutamine = D-erythro-1-(imidazol-4-yl)glycerol 3-phosphate + 5-amino-1-(5-phospho-beta-D-ribosyl)imidazole-4-carboxamide + L-glutamate + H(+). It carries out the reaction L-glutamine + H2O = L-glutamate + NH4(+). It participates in amino-acid biosynthesis; L-histidine biosynthesis; L-histidine from 5-phospho-alpha-D-ribose 1-diphosphate: step 5/9. In terms of biological role, IGPS catalyzes the conversion of PRFAR and glutamine to IGP, AICAR and glutamate. The HisH subunit catalyzes the hydrolysis of glutamine to glutamate and ammonia as part of the synthesis of IGP and AICAR. The resulting ammonia molecule is channeled to the active site of HisF. The polypeptide is Imidazole glycerol phosphate synthase subunit HisH (Bordetella bronchiseptica (strain ATCC BAA-588 / NCTC 13252 / RB50) (Alcaligenes bronchisepticus)).